We begin with the raw amino-acid sequence, 508 residues long: Histidine ammonia-lyase (508 aa).

A cross-link (5-imidazolinone (Ala-Gly)) is located at residues 141-143 (ASG). S142 carries the post-translational modification 2,3-didehydroalanine (Ser).

It belongs to the PAL/histidase family. Contains an active site 4-methylidene-imidazol-5-one (MIO), which is formed autocatalytically by cyclization and dehydration of residues Ala-Ser-Gly.

It is found in the cytoplasm. It catalyses the reaction L-histidine = trans-urocanate + NH4(+). It functions in the pathway amino-acid degradation; L-histidine degradation into L-glutamate; N-formimidoyl-L-glutamate from L-histidine: step 1/3. The protein is Histidine ammonia-lyase of Geobacillus sp. (strain WCH70).